The chain runs to 126 residues: Small ribosomal subunit protein uS11 (126 aa).

Belongs to the universal ribosomal protein uS11 family. Part of the 30S ribosomal subunit. Interacts with proteins S7 and S18. Binds to IF-3.

In terms of biological role, located on the platform of the 30S subunit, it bridges several disparate RNA helices of the 16S rRNA. Forms part of the Shine-Dalgarno cleft in the 70S ribosome. The sequence is that of Small ribosomal subunit protein uS11 from Orientia tsutsugamushi (strain Boryong) (Rickettsia tsutsugamushi).